A 194-amino-acid chain; its full sequence is Adenylate kinase isoenzyme 1 (194 aa).

Residue Met-1 is modified to N-acetylmethionine. 18 to 23 (GSGKGT) provides a ligand contact to ATP. Phosphoserine is present on Ser-38. An NMP region spans residues 38–67 (STGDLLRAEVSSGSARGKMLSEIMEKGQLV). AMP is bound by residues Thr-39, Arg-44, 65–67 (QLV), 94–97 (GYPR), and Gln-101. Positions 131-141 (KRGETSGRVDD) are LID. An ATP-binding site is contributed by Arg-132. AMP is bound by residues Arg-138 and Arg-149. Position 177 (Gly-177) interacts with ATP.

It belongs to the adenylate kinase family. AK1 subfamily. In terms of assembly, monomer. Requires Mg(2+) as cofactor.

It is found in the cytoplasm. The enzyme catalyses a ribonucleoside 5'-phosphate + ATP = a ribonucleoside 5'-diphosphate + ADP. The catalysed reaction is AMP + ATP = 2 ADP. It carries out the reaction dAMP + ATP = dADP + ADP. It catalyses the reaction dATP + AMP = dADP + ADP. The enzyme catalyses dAMP + dATP = 2 dADP. The catalysed reaction is a 2'-deoxyribonucleoside 5'-diphosphate + ATP = a 2'-deoxyribonucleoside 5'-triphosphate + ADP. It carries out the reaction a ribonucleoside 5'-diphosphate + ATP = a ribonucleoside 5'-triphosphate + ADP. It catalyses the reaction CDP + GTP = CTP + GDP. The enzyme catalyses GDP + ATP = GTP + ADP. The catalysed reaction is UDP + ATP = UTP + ADP. It carries out the reaction GTP + UDP = UTP + GDP. It catalyses the reaction dTDP + GTP = dTTP + GDP. The enzyme catalyses dCDP + GTP = dCTP + GDP. The catalysed reaction is dGDP + ATP = dGTP + ADP. It carries out the reaction dADP + GTP = dATP + GDP. It catalyses the reaction thiamine diphosphate + ADP = thiamine triphosphate + AMP. In terms of biological role, catalyzes the reversible transfer of the terminal phosphate group between ATP and AMP. Also displays broad nucleoside diphosphate kinase activity. Plays an important role in cellular energy homeostasis and in adenine nucleotide metabolism. Also catalyzes at a very low rate the synthesis of thiamine triphosphate (ThTP) from thiamine diphosphate (ThDP) and ADP. The chain is Adenylate kinase isoenzyme 1 from Bos taurus (Bovine).